Reading from the N-terminus, the 433-residue chain is Xylose isomerase (433 aa).

Active-site residues include histidine 99 and aspartate 102. The Mg(2+) site is built by glutamate 230, glutamate 266, histidine 269, aspartate 294, aspartate 305, aspartate 307, and aspartate 337.

It belongs to the xylose isomerase family. In terms of assembly, homotetramer. Mg(2+) serves as cofactor.

It localises to the cytoplasm. The catalysed reaction is alpha-D-xylose = alpha-D-xylulofuranose. This is Xylose isomerase from Cereibacter sphaeroides (strain ATCC 17023 / DSM 158 / JCM 6121 / CCUG 31486 / LMG 2827 / NBRC 12203 / NCIMB 8253 / ATH 2.4.1.) (Rhodobacter sphaeroides).